Reading from the N-terminus, the 435-residue chain is 3-phosphoshikimate 1-carboxyvinyltransferase (435 aa).

3-phosphoshikimate-binding residues include Lys15, Ser16, and Arg20. Lys15 provides a ligand contact to phosphoenolpyruvate. Residues Gly96 and Arg124 each contribute to the phosphoenolpyruvate site. 3-phosphoshikimate is bound by residues Ser169, Gln171, Ser195, Asp319, and Lys346. Gln171 contacts phosphoenolpyruvate. The active-site Proton acceptor is Asp319. Phosphoenolpyruvate is bound by residues Arg350 and Arg395.

This sequence belongs to the EPSP synthase family. As to quaternary structure, monomer.

The protein localises to the cytoplasm. The enzyme catalyses 3-phosphoshikimate + phosphoenolpyruvate = 5-O-(1-carboxyvinyl)-3-phosphoshikimate + phosphate. The protein operates within metabolic intermediate biosynthesis; chorismate biosynthesis; chorismate from D-erythrose 4-phosphate and phosphoenolpyruvate: step 6/7. In terms of biological role, catalyzes the transfer of the enolpyruvyl moiety of phosphoenolpyruvate (PEP) to the 5-hydroxyl of shikimate-3-phosphate (S3P) to produce enolpyruvyl shikimate-3-phosphate and inorganic phosphate. This chain is 3-phosphoshikimate 1-carboxyvinyltransferase, found in Chlorobium phaeobacteroides (strain BS1).